We begin with the raw amino-acid sequence, 98 residues long: Protein S100-A13 (98 aa).

In terms of domain architecture, EF-hand spans 18-53; the sequence is TTFFTFARQEGRKDSLSVNEFKELVTQQLPHLLKDV. S32, E37, D64, N66, D68, E70, and E75 together coordinate Ca(2+). Position 32 is a phosphoserine (S32).

This sequence belongs to the S-100 family. Homodimer. Part of a copper-dependent multiprotein complex containing S100A13, FGF1 and SYT1. Interacts with FGF1 and SYT1. Interacts with IL1A. As to expression, expressed in heart and skeletal muscle.

It is found in the cytoplasm. Its subcellular location is the secreted. In terms of biological role, plays a role in the export of proteins that lack a signal peptide and are secreted by an alternative pathway. Binds two calcium ions per subunit. Binds one copper ion. Binding of one copper ion does not interfere with calcium binding. Required for the copper-dependent stress-induced export of IL1A and FGF1. The calcium-free protein binds to lipid vesicles containing phosphatidylserine, but not to vesicles containing phosphatidylcholine. In Homo sapiens (Human), this protein is Protein S100-A13 (S100A13).